Consider the following 426-residue polypeptide: 3-phosphoshikimate 1-carboxyvinyltransferase (426 aa).

Residues Lys22, Ser23, and Arg27 each contribute to the 3-phosphoshikimate site. Lys22 is a phosphoenolpyruvate binding site. The phosphoenolpyruvate site is built by Gly96 and Arg124. 7 residues coordinate 3-phosphoshikimate: Ser170, Ser171, Gln172, Ser198, Asp314, Asn337, and Lys341. Gln172 contributes to the phosphoenolpyruvate binding site. The active-site Proton acceptor is the Asp314. Phosphoenolpyruvate-binding residues include Arg345, Arg387, and Lys412.

This sequence belongs to the EPSP synthase family. In terms of assembly, monomer.

The protein resides in the cytoplasm. It catalyses the reaction 3-phosphoshikimate + phosphoenolpyruvate = 5-O-(1-carboxyvinyl)-3-phosphoshikimate + phosphate. The protein operates within metabolic intermediate biosynthesis; chorismate biosynthesis; chorismate from D-erythrose 4-phosphate and phosphoenolpyruvate: step 6/7. Catalyzes the transfer of the enolpyruvyl moiety of phosphoenolpyruvate (PEP) to the 5-hydroxyl of shikimate-3-phosphate (S3P) to produce enolpyruvyl shikimate-3-phosphate and inorganic phosphate. In Shewanella baltica (strain OS185), this protein is 3-phosphoshikimate 1-carboxyvinyltransferase.